Here is a 447-residue protein sequence, read N- to C-terminus: Argininosuccinate lyase (447 aa).

Belongs to the lyase 1 family. Argininosuccinate lyase subfamily.

The protein localises to the cytoplasm. It catalyses the reaction 2-(N(omega)-L-arginino)succinate = fumarate + L-arginine. It participates in amino-acid biosynthesis; L-arginine biosynthesis; L-arginine from L-ornithine and carbamoyl phosphate: step 3/3. The polypeptide is Argininosuccinate lyase (Bacteroides fragilis (strain ATCC 25285 / DSM 2151 / CCUG 4856 / JCM 11019 / LMG 10263 / NCTC 9343 / Onslow / VPI 2553 / EN-2)).